The sequence spans 328 residues: MANGDSPDQNENHCSAINSSILLTPGSLPTLTLSGKIRVTVTFFLFLLSTIFNTSFLLKLQNWTQRKEKRKKLSKMKVLLKHLTLANLLETLIVMPLDGMWNITVQWYAGELLCKVLSYLKLFSMYAPAFMMVVISLDRSLAITRPLAVKSNSKLGQFMIGLAWLLSSIFAGPQLYIFGMIHLADDSGQTEGFSQCVTHCSFPQWWHQAFYNFFTFSCLFIIPLLIMLICNAKIIFTLTRVLHQDPHKLQLNQSKNNIPQARLRTLKMTVAFATSFTVCWTPYYVLGIWYWFDPDMVNRVSDPVNHFFFLFAFLNPCFDPLIYGYFSL.

Residues 1 to 38 (MANGDSPDQNENHCSAINSSILLTPGSLPTLTLSGKIR) are Extracellular-facing. N-linked (GlcNAc...) asparagine glycosylation is present at Asn18. A helical transmembrane segment spans residues 39–58 (VTVTFFLFLLSTIFNTSFLL). The Cytoplasmic portion of the chain corresponds to 59 to 77 (KLQNWTQRKEKRKKLSKMK). A helical transmembrane segment spans residues 78–97 (VLLKHLTLANLLETLIVMPL). Residues 98-115 (DGMWNITVQWYAGELLCK) are Extracellular-facing. Asn102 carries an N-linked (GlcNAc...) asparagine glycan. A disulfide bond links Cys114 and Cys196. The chain crosses the membrane as a helical span at residues 116–137 (VLSYLKLFSMYAPAFMMVVISL). Residues 138–164 (DRSLAITRPLAVKSNSKLGQFMIGLAW) are Cytoplasmic-facing. Residues 165-184 (LLSSIFAGPQLYIFGMIHLA) traverse the membrane as a helical segment. At 185–212 (DDSGQTEGFSQCVTHCSFPQWWHQAFYN) the chain is on the extracellular side. The helical transmembrane segment at 213–232 (FFTFSCLFIIPLLIMLICNA) threads the bilayer. At 233–281 (KIIFTLTRVLHQDPHKLQLNQSKNNIPQARLRTLKMTVAFATSFTVCWT) the chain is on the cytoplasmic side. Residues 282–300 (PYYVLGIWYWFDPDMVNRV) form a helical membrane-spanning segment. At 301 to 306 (SDPVNH) the chain is on the extracellular side. A helical transmembrane segment spans residues 307 to 326 (FFFLFAFLNPCFDPLIYGYF). Residues 327-328 (SL) are Cytoplasmic-facing.

The protein belongs to the G-protein coupled receptor 1 family.

It is found in the cell membrane. Functionally, receptor for gonadotropin releasing hormone (GnRH) that mediates the action of GnRH to stimulate the secretion of the gonadotropic hormones luteinizing hormone (LH) and follicle-stimulating hormone (FSH). This receptor mediates its action by association with G-proteins that activate a phosphatidylinositol-calcium second messenger system. The sequence is that of Gonadotropin-releasing hormone receptor (GNRHR) from Ovis aries (Sheep).